Reading from the N-terminus, the 715-residue chain is Myosin light chain kinase 3 (715 aa).

The segment at 67–114 is disordered; the sequence is VTLPNDPSSQHSPEAHTGASEPLKPVSAGESSKALQKAKEISVKSSEP. The Protein kinase domain occupies 404–659; the sequence is VNPVEVLGGG…ASGCMKHSWL (256 aa). ATP is bound by residues 410-418 and Lys433; that span reads LGGGRFGQV. Asp525 acts as the Proton acceptor in catalysis.

Belongs to the protein kinase superfamily. CAMK Ser/Thr protein kinase family. Mg(2+) serves as cofactor. In terms of processing, phosphorylated on serine residues.

Its subcellular location is the cytoplasm. It carries out the reaction L-seryl-[myosin light chain] + ATP = O-phospho-L-seryl-[myosin light chain] + ADP + H(+). It catalyses the reaction L-threonyl-[myosin light chain] + ATP = O-phospho-L-threonyl-[myosin light chain] + ADP + H(+). Its function is as follows. Kinase that phosphorylates MYL2 in vitro. Increases cardiomyocyte contractility. Required for sarcomere formation in the developing heart. This Danio rerio (Zebrafish) protein is Myosin light chain kinase 3 (mylk3).